A 191-amino-acid polypeptide reads, in one-letter code: Succinoglycan biosynthesis protein ExoI (191 aa).

A disordered region spans residues 1–21; the sequence is MTRIKSAVAAGGRRAPHSARL.

The protein operates within glycan metabolism; exopolysaccharide biosynthesis. This chain is Succinoglycan biosynthesis protein ExoI (exoI), found in Rhizobium meliloti (strain 1021) (Ensifer meliloti).